An 83-amino-acid chain; its full sequence is Exodeoxyribonuclease 7 small subunit (83 aa).

The protein belongs to the XseB family. Heterooligomer composed of large and small subunits.

The protein localises to the cytoplasm. The catalysed reaction is Exonucleolytic cleavage in either 5'- to 3'- or 3'- to 5'-direction to yield nucleoside 5'-phosphates.. Its function is as follows. Bidirectionally degrades single-stranded DNA into large acid-insoluble oligonucleotides, which are then degraded further into small acid-soluble oligonucleotides. The chain is Exodeoxyribonuclease 7 small subunit from Rhizobium meliloti (strain 1021) (Ensifer meliloti).